The chain runs to 178 residues: Large ribosomal subunit protein uL6 (178 aa).

It belongs to the universal ribosomal protein uL6 family. In terms of assembly, part of the 50S ribosomal subunit.

This protein binds to the 23S rRNA, and is important in its secondary structure. It is located near the subunit interface in the base of the L7/L12 stalk, and near the tRNA binding site of the peptidyltransferase center. The sequence is that of Large ribosomal subunit protein uL6 from Enterococcus faecalis (strain ATCC 700802 / V583).